The sequence spans 420 residues: LanC-like protein 3 (420 aa).

The protein belongs to the LanC-like protein family.

The chain is LanC-like protein 3 (Lancl3) from Mus musculus (Mouse).